A 528-amino-acid chain; its full sequence is Tyrosine 3-monooxygenase (528 aa).

Residue serine 19 is modified to Phosphoserine; by CaMK2. The disordered stretch occupies residues 33–65 (GQGAPGPSLTGSPWPGTAAPAASYTPTPRSPRF). Residues 47–59 (PGTAAPAASYTPT) show a composition bias toward low complexity. Serine 62 is subject to Phosphoserine. Serine 71 bears the Phosphoserine; by CaMK2 and PKA mark. Fe cation-binding residues include histidine 361, histidine 366, and glutamate 406. The residue at position 502 (serine 502) is a Phosphoserine.

It belongs to the biopterin-dependent aromatic amino acid hydroxylase family. As to quaternary structure, homotetramer. Interacts (when phosphorylated at Ser-19) with YWHAG; one YWHAG dimer binds to one TH tetramer and this interaction may influence the phosphorylation and dephosphorylation of other sites. Interacts with NT5DC2; the interaction results in reduced phosphorylation and decreased catalytic activity of TH. It depends on Fe(2+) as a cofactor. Phosphorylated on Ser-19, Ser-62 and Ser-71 by several protein kinases with different site specificities. Phosphorylation at Ser-62 and Ser-71 leads to an increase of TH activity. Phosphorylation at Ser-71 activates the enzyme and also counteracts the feedback inhibition of TH by catecholamines. Phosphorylation of Ser-19 and Ser-62 triggers the proteasomal degradation of TH through the ubiquitin-proteasome pathway. Phosphorylation at Ser-62 facilitates transport of TH from the soma to the nerve terminals via the microtubule network. Phosphorylation at Ser-19 induces the high-affinity binding to the 14-3-3 protein YWHAG; this interaction may influence the phosphorylation and dephosphorylation of other sites. Ser-19 increases the phosphorylation at Ser-71 in a hierarchical manner, leading to increased activity. In terms of tissue distribution, mainly expressed in the brain and adrenal glands.

Its subcellular location is the cytoplasm. The protein resides in the perinuclear region. The protein localises to the nucleus. It is found in the cell projection. It localises to the axon. Its subcellular location is the cytoplasmic vesicle. The protein resides in the secretory vesicle. The protein localises to the synaptic vesicle. It carries out the reaction (6R)-L-erythro-5,6,7,8-tetrahydrobiopterin + L-tyrosine + O2 = (4aS,6R)-4a-hydroxy-L-erythro-5,6,7,8-tetrahydrobiopterin + L-dopa. The protein operates within catecholamine biosynthesis; dopamine biosynthesis; dopamine from L-tyrosine: step 1/2. Inhibited in feedback fashion by the catecholamine neurotransmitters, especially by dopamine in competition with tetrahydrobiopterin. Phosphorylation of several Ser/Thr residues in the N-terminus regulates the catalytic activity. Ser-62 and Ser-71 are readily phosphorylated to activate the catalytic activity. A Cysteine modification induced by N-ethylmaleimide (NEM), inhibits tyrosine 3-monooxygenase activity through the modification of the Cys-207. Functionally, catalyzes the conversion of L-tyrosine to L-dihydroxyphenylalanine (L-Dopa), the rate-limiting step in the biosynthesis of catecholamines, dopamine, noradrenaline, and adrenaline. Uses tetrahydrobiopterin and molecular oxygen to convert tyrosine to L-Dopa. In addition to tyrosine, is able to catalyze the hydroxylation of phenylalanine and tryptophan with lower specificity. Positively regulates the regression of retinal hyaloid vessels during postnatal development. Lacks catalytic activity. In Homo sapiens (Human), this protein is Tyrosine 3-monooxygenase.